The chain runs to 319 residues: MKKKKIGLLVMAYGTPESLDDVEAYYTHIRHGRKPSEEALEDLIGRYKAIGGISPLAKITKEQAHKLTDSMNNIFTEYEFTCYLGLKHTAPFIEDAVEEMKRNGIEQTISIVLAPHYSTFSIKAYNDRAIRLSKEIGGPVIESIEQWYDEPKFISYWADQIKETFTEIDDKEKAVVIFSAHSLPEKIIAAGDPYVEQLKHTADLIAEAANIQNYTIGWQSAGNTPDPWIGPDVQDLTKDLYEEHGYESFIYCPVGFVAEHLEVLYDNDYECKVVTDELNAKYFRPNMPNAQSAFIDCLAEIVSKKVKEIVDKDLVLNNN.

Fe-coproporphyrin III is bound by residues Tyr13, Arg30, 46–47 (RY), Ser54, and Tyr125. Positions 181 and 262 each coordinate Fe(2+).

This sequence belongs to the ferrochelatase family.

The protein localises to the cytoplasm. It carries out the reaction Fe-coproporphyrin III + 2 H(+) = coproporphyrin III + Fe(2+). It participates in porphyrin-containing compound metabolism; protoheme biosynthesis. In terms of biological role, involved in coproporphyrin-dependent heme b biosynthesis. Catalyzes the insertion of ferrous iron into coproporphyrin III to form Fe-coproporphyrin III. The protein is Coproporphyrin III ferrochelatase 2 of Bacillus cereus (strain ATCC 14579 / DSM 31 / CCUG 7414 / JCM 2152 / NBRC 15305 / NCIMB 9373 / NCTC 2599 / NRRL B-3711).